Here is a 96-residue protein sequence, read N- to C-terminus: UPF0235 protein KPK_0722 (96 aa).

Belongs to the UPF0235 family.

The sequence is that of UPF0235 protein KPK_0722 from Klebsiella pneumoniae (strain 342).